We begin with the raw amino-acid sequence, 317 residues long: Osteopontin (317 aa).

An N-terminal signal peptide occupies residues 1 to 16 (MRLAVVCFCLFGLASC). A phosphoserine mark is found at Ser26, Ser27, Ser60, Ser62, and Ser63. A disordered region spans residues 43–297 (WLKPDPSQKQ…LVLDPKSKED (255 aa)). The segment covering 49–63 (SQKQNLLAPQNSVSS) has biased composition (polar residues). Position 66 is a phosphothreonine (Thr66). A phosphoserine mark is found at Ser76, Ser78, Ser81, Ser106, Ser109, Ser112, Ser115, and Ser118. The span at 86-110 (DDDDDDDDDGDHAESEDSVNSDESD) shows a compositional bias: acidic residues. Residues Thr123, Thr132, and Thr137 are each glycosylated (O-linked (GalNAc...) threonine). The Cell attachment site signature appears at 144–146 (RGD). Residues Thr170 and Thr175 each carry the phosphothreonine modification. Basic and acidic residues predominate over residues 174–187 (LTSRMKSQESDEAI). A phosphoserine mark is found at Ser176, Ser180, Ser200, Ser204, Ser209, Ser213, and Ser219. Over residues 197–216 (SVPSDQDSNGKTSHESSQLD) the composition is skewed to polar residues. O-linked (Xyl...) (chondroitin sulfate) serine glycosylation occurs at Ser219. Thr222 bears the Phosphothreonine mark. 2 stretches are compositionally biased toward basic and acidic residues: residues 223–240 (HSLE…HEST) and 248–263 (SAEK…RSDA). Phosphoserine occurs at positions 224, 228, 257, 261, 266, 270, 273, 278, 283, 294, 306, 311, 313, and 314. The span at 273 to 297 (SLEHQSHEFHSHEDKLVLDPKSKED) shows a compositional bias: basic and acidic residues. Ser311 is a glycosylation site (O-linked (Xyl...) (chondroitin sulfate) serine).

It belongs to the osteopontin family. As to quaternary structure, interacts (via N-terminus) with integrin ITGA9:ITGB1. Post-translationally, extensively phosphorylated by FAM20C in the extracellular medium at multiple sites within the S-x-E/pS motif. The phosphorylated form inhibits hydroxyapatite crystallization. Dephosphorylation via a mechanism involving ALPL/TNAP promotes hydroxyapatite crystallization. In terms of processing, O-glycosylated. Forms covalent cross-links mediated by transglutaminase TGM2, between a glutamine and the epsilon-amino group of a lysine residue, forming homopolymers and heteropolymers, increasing its collagen binding properties.

It localises to the secreted. Major non-collagenous bone protein that binds tightly to hydroxyapatite. Appears to form an integral part of the mineralized matrix. Probably important to cell-matrix interaction. In terms of biological role, acts as a cytokine involved in enhancing production of interferon-gamma and interleukin-12 and reducing production of interleukin-10 and is essential in the pathway that leads to type I immunity. This is Osteopontin (Spp1) from Rattus norvegicus (Rat).